We begin with the raw amino-acid sequence, 386 residues long: D-amino-acid oxidase (386 aa).

The FAD site is built by glycine 14, glycine 15, valine 16, valine 17, glutamate 39, arginine 40, alanine 51, glycine 52, and glycine 53. The tract at residues 109–138 is disordered; sequence SSSPPHPLLPPWVDPSASAAPPRELGTPDT. The segment covering 112-121 has biased composition (pro residues); the sequence is PPHPLLPPWV. 3 residues coordinate FAD: arginine 174, valine 175, and alanine 176. The D-serine site is built by tyrosine 253, tyrosine 261, and lysine 332. 2 residues coordinate D-proline: tyrosine 261 and lysine 332. 5 residues coordinate FAD: lysine 332, glycine 344, isoleucine 345, glycine 362, and alanine 364. Lysine 332 contacts D-dopa. Position 362 (glycine 362) interacts with D-serine. A D-proline-binding site is contributed by glycine 362. Glycine 362 lines the D-dopa pocket.

Belongs to the DAMOX/DASOX family.

It carries out the reaction a D-alpha-amino acid + O2 + H2O = a 2-oxocarboxylate + H2O2 + NH4(+). The enzyme catalyses D-alanine + O2 + H2O = pyruvate + H2O2 + NH4(+). The catalysed reaction is D-aspartate + O2 + H2O = oxaloacetate + H2O2 + NH4(+). In terms of biological role, catalyzes the oxidative deamination of D-amino acids with broad substrate specificity. Enables the organism to utilize D-amino acids as a source of nutrients. This is D-amino-acid oxidase from Zea mays (Maize).